We begin with the raw amino-acid sequence, 400 residues long: 2-octaprenylphenol hydroxylase (400 aa).

FAD is bound by residues 49 to 52 (RVSA) and 297 to 303 (LAGQGVN).

It belongs to the UbiH/COQ6 family. In terms of assembly, homotetramer. Component of the Ubi complex metabolon, which regroups five ubiquinone biosynthesis proteins (UbiE, UbiF, UbiG, UbiH and UbiI) and two accessory factors (UbiK and the lipid-binding protein UbiJ). FAD is required as a cofactor.

The protein resides in the cytoplasm. It catalyses the reaction 2-all-trans-octaprenylphenol + NADPH + O2 + H(+) = 3-(all-trans-octaprenyl)benzene-1,2-diol + NADP(+) + H2O. The enzyme catalyses a 2-(all-trans-polyprenyl)phenol + NADPH + O2 + H(+) = a 3-(all-trans-polyprenyl)benzene-1,2-diol + NADP(+) + H2O. It participates in cofactor biosynthesis; ubiquinone biosynthesis. Its function is as follows. FAD-dependent monooxygenase required for the aerobic hydroxylation of 2-octaprenylphenol to 2-octaprenyl-6-hydroxy-phenol, the first hydroxylation step in coenzyme Q (ubiquinone) biosynthesis. This Escherichia coli (strain K12) protein is 2-octaprenylphenol hydroxylase.